We begin with the raw amino-acid sequence, 318 residues long: MFMINVLTLIIPILLAVAFLTLVERKVLGYMQFRKGPNVVGPYGLLQPIADAIKLFIKEPLRPATSSISMFILAPILALTLALTMWIPLPMPYPLINMNLGVLFMLAMSSLAVYSILWSGWASNSKYALIGALRAVAQTISYEVTLAIILLSVLLMNGSFTLSTLIITQEQVWLIFPAWPLAMMWFISTLAETNRAPFDLTEGESELVSGFNVEYAAGPFALFFMAEYANIIMMNIFTTTLFLGAFHNPYMPELYTINFTIKSLLLSITFLWIRASYPRFRYDQLMHLLWKNFLPLTLALCMWHVSLPILLSSIPPQT.

8 helical membrane-spanning segments follow: residues 2–22 (FMINVLTLIIPILLAVAFLTL), 68–88 (ISMFILAPILALTLALTMWIP), 100–120 (LGVLFMLAMSSLAVYSILWSG), 147–167 (AIILLSVLLMNGSFTLSTLII), 172–192 (VWLIFPAWPLAMMWFISTLAE), 217–237 (AGPFALFFMAEYANIIMMNIF), 253–273 (ELYTINFTIKSLLLSITFLWI), and 294–314 (LPLTLALCMWHVSLPILLSSI).

The protein belongs to the complex I subunit 1 family.

It is found in the mitochondrion inner membrane. The catalysed reaction is a ubiquinone + NADH + 5 H(+)(in) = a ubiquinol + NAD(+) + 4 H(+)(out). Its function is as follows. Core subunit of the mitochondrial membrane respiratory chain NADH dehydrogenase (Complex I) that is believed to belong to the minimal assembly required for catalysis. Complex I functions in the transfer of electrons from NADH to the respiratory chain. The immediate electron acceptor for the enzyme is believed to be ubiquinone. This chain is NADH-ubiquinone oxidoreductase chain 1 (MT-ND1), found in Ovis aries (Sheep).